The chain runs to 103 residues: Large ribosomal subunit protein bL21 (103 aa).

It belongs to the bacterial ribosomal protein bL21 family. In terms of assembly, part of the 50S ribosomal subunit. Contacts protein L20.

Its function is as follows. This protein binds to 23S rRNA in the presence of protein L20. The polypeptide is Large ribosomal subunit protein bL21 (Desulfitobacterium hafniense (strain DSM 10664 / DCB-2)).